The following is a 148-amino-acid chain: MSDSVELYTDGACKGNPGPGGWGVLLIYKGVEKELWGGERETTNNRMELMAAIQGLMALKRECEVVLTTDSQYVMKGINEWMVNWKKRGWKTAAKEPVKNADLWQQLDEQVNRHKVTWKWVRGHIGHPGNERADQLANRGVDEVRAKR.

The 142-residue stretch at 1 to 142 (MSDSVELYTD…ADQLANRGVD (142 aa)) folds into the RNase H type-1 domain. The Mg(2+) site is built by D10, E48, D70, and D134. Residues 129–148 (GNERADQLANRGVDEVRAKR) form a disordered region.

It belongs to the RNase H family. As to quaternary structure, monomer. Requires Mg(2+) as cofactor.

It is found in the cytoplasm. The enzyme catalyses Endonucleolytic cleavage to 5'-phosphomonoester.. Endonuclease that specifically degrades the RNA of RNA-DNA hybrids. This Pseudomonas putida (strain W619) protein is Ribonuclease H.